The primary structure comprises 227 residues: DNA repair protein RecO (227 aa).

Belongs to the RecO family.

In terms of biological role, involved in DNA repair and RecF pathway recombination. The chain is DNA repair protein RecO from Pseudomonas putida (strain ATCC 700007 / DSM 6899 / JCM 31910 / BCRC 17059 / LMG 24140 / F1).